A 366-amino-acid chain; its full sequence is tRNA/tmRNA (uracil-C(5))-methyltransferase (366 aa).

5 residues coordinate S-adenosyl-L-methionine: Gln-190, Tyr-218, Asn-223, Glu-239, and Asp-299. Residue Cys-324 is the Nucleophile of the active site. Residue Glu-358 is the Proton acceptor of the active site.

It belongs to the class I-like SAM-binding methyltransferase superfamily. RNA M5U methyltransferase family. TrmA subfamily.

It carries out the reaction uridine(54) in tRNA + S-adenosyl-L-methionine = 5-methyluridine(54) in tRNA + S-adenosyl-L-homocysteine + H(+). The catalysed reaction is uridine(341) in tmRNA + S-adenosyl-L-methionine = 5-methyluridine(341) in tmRNA + S-adenosyl-L-homocysteine + H(+). In terms of biological role, dual-specificity methyltransferase that catalyzes the formation of 5-methyluridine at position 54 (m5U54) in all tRNAs, and that of position 341 (m5U341) in tmRNA (transfer-mRNA). This chain is tRNA/tmRNA (uracil-C(5))-methyltransferase, found in Enterobacter sp. (strain 638).